Reading from the N-terminus, the 456-residue chain is Arginine biosynthesis bifunctional protein ArgJ, mitochondrial (456 aa).

6 residues coordinate substrate: Thr-184, Lys-213, Thr-224, Glu-311, Asn-451, and Thr-456. Thr-224 functions as the Nucleophile in the catalytic mechanism.

This sequence belongs to the ArgJ family. Heterodimer of an alpha and a beta chain. Post-translationally, the alpha and beta chains are autoproteolytically processed from a single precursor protein within the mitochondrion.

It localises to the mitochondrion matrix. It carries out the reaction N(2)-acetyl-L-ornithine + L-glutamate = N-acetyl-L-glutamate + L-ornithine. It catalyses the reaction L-glutamate + acetyl-CoA = N-acetyl-L-glutamate + CoA + H(+). It functions in the pathway amino-acid biosynthesis; L-arginine biosynthesis; L-ornithine and N-acetyl-L-glutamate from L-glutamate and N(2)-acetyl-L-ornithine (cyclic): step 1/1. It participates in amino-acid biosynthesis; L-arginine biosynthesis; N(2)-acetyl-L-ornithine from L-glutamate: step 1/4. Functionally, catalyzes two activities which are involved in the cyclic version of arginine biosynthesis: the synthesis of acetylglutamate from glutamate and acetyl-CoA, and of ornithine by transacetylation between acetylornithine and glutamate. The polypeptide is Arginine biosynthesis bifunctional protein ArgJ, mitochondrial (Neosartorya fischeri (strain ATCC 1020 / DSM 3700 / CBS 544.65 / FGSC A1164 / JCM 1740 / NRRL 181 / WB 181) (Aspergillus fischerianus)).